Consider the following 1128-residue polypeptide: Transient receptor potential-gamma protein (1128 aa).

Residues 1–325 (MMEEENTIRP…MALQAVDIIR (325 aa)) are Cytoplasmic-facing. 2 ANK repeats span residues 57 to 86 (LGRT…DTKD) and 131 to 160 (PDIT…VLPM). Residues 326-346 (IGIMFPIFSLAYILAPYSSIG) traverse the membrane as a helical segment. At 347-403 (QTMRKPFIKFICHSASYFTFLFLLMLASQRIETFIGGWFFADSSGMLNTMEELPTKR) the chain is on the extracellular side. Residues 404 to 424 (GAKPTFIEWLILAWVSGLIWS) traverse the membrane as a helical segment. Over 425-444 (EVKQLWDVGLQEYLNDMWNV) the chain is Cytoplasmic. The helical transmembrane segment at 445–465 (IDFVTNSLYVATVALRVVSFF) threads the bilayer. Topologically, residues 466–492 (QVQKEMIYNSHATDLPRERWDAWDPML) are extracellular. The helical transmembrane segment at 493–513 (ISEGLFSAANIFSSLKLVYIF) threads the bilayer. Topologically, residues 514–535 (SVNPHLGPLQVSLSRMVMDIMK) are cytoplasmic. A helical membrane pass occupies residues 536–556 (FFFLYVLVLFAFGSGLNQLLW). Residues 557–629 (YYADLEKKRC…GIKIFTRFWG (73 aa)) lie on the Extracellular side of the membrane. The chain crosses the membrane as a helical span at residues 630-650 (MLMFGTYSVINIVVLLNLLIA). Over 651-1128 (MMNHSYQLIS…SCVSTTGAIG (478 aa)) the chain is Cytoplasmic. Disordered stretches follow at residues 865-898 (RQQS…TASS) and 1064-1111 (AAEA…SVNS). Residues 878 to 893 (ESPTTPTAPQGTQGAA) are compositionally biased toward low complexity. Residues 1085–1111 (TQSQHDSVETNSTFTLSIDPSNTSVNS) are compositionally biased toward polar residues.

The protein belongs to the transient receptor (TC 1.A.4) family. STrpC subfamily. Interacts preferentially with trpl and interacts to a lower extent with trp. Expressed predominantly in the rhabdomeres of photoreceptor cells.

The protein resides in the cell projection. Its subcellular location is the rhabdomere membrane. A light-sensitive calcium channel that is required for inositide-mediated Ca(2+) entry in the retina during phospholipase C (PLC)-mediated phototransduction. Forms a regulated cation channel when heteromultimerized with trpl. This is Transient receptor potential-gamma protein (Trpgamma) from Drosophila melanogaster (Fruit fly).